We begin with the raw amino-acid sequence, 441 residues long: Deoxyguanosinetriphosphate triphosphohydrolase-like protein 1 (441 aa).

Positions 62–255 (RLTHSLEAAQ…MELADDIAYG (194 aa)) constitute an HD domain.

The protein belongs to the dGTPase family. Type 2 subfamily.

The chain is Deoxyguanosinetriphosphate triphosphohydrolase-like protein 1 from Vibrio cholerae serotype O1 (strain ATCC 39315 / El Tor Inaba N16961).